Here is a 300-residue protein sequence, read N- to C-terminus: 4-hydroxy-tetrahydrodipicolinate synthase (300 aa).

Position 45 (threonine 45) interacts with pyruvate. The active-site Proton donor/acceptor is tyrosine 140. Catalysis depends on lysine 169, which acts as the Schiff-base intermediate with substrate. Isoleucine 210 is a binding site for pyruvate.

This sequence belongs to the DapA family. In terms of assembly, homotetramer; dimer of dimers.

It localises to the cytoplasm. It carries out the reaction L-aspartate 4-semialdehyde + pyruvate = (2S,4S)-4-hydroxy-2,3,4,5-tetrahydrodipicolinate + H2O + H(+). It functions in the pathway amino-acid biosynthesis; L-lysine biosynthesis via DAP pathway; (S)-tetrahydrodipicolinate from L-aspartate: step 3/4. Its function is as follows. Catalyzes the condensation of (S)-aspartate-beta-semialdehyde [(S)-ASA] and pyruvate to 4-hydroxy-tetrahydrodipicolinate (HTPA). The polypeptide is 4-hydroxy-tetrahydrodipicolinate synthase (Helicobacter pylori (strain J99 / ATCC 700824) (Campylobacter pylori J99)).